We begin with the raw amino-acid sequence, 327 residues long: Probable cell division protein WhiA (327 aa).

A DNA-binding region (H-T-H motif) is located at residues 275–308; it reads SLEELGRLADPQMTKDAVAGRIRRLLTMADKRAE.

It belongs to the WhiA family.

Functionally, involved in cell division and chromosome segregation. The polypeptide is Probable cell division protein WhiA (Corynebacterium glutamicum (strain R)).